A 360-amino-acid chain; its full sequence is BOLA class I histocompatibility antigen, alpha chain BL3-6 (360 aa).

The N-terminal stretch at 1–21 is a signal peptide; the sequence is MGPRALLLLLSGVLILTETRA. Residues 22–111 form an alpha-1 region; sequence GSHSLRYFST…LRGYYNQSEA (90 aa). Residues 22-308 lie on the Extracellular side of the membrane; the sequence is GSHSLRYFST…QPSFLTMGII (287 aa). An N-linked (GlcNAc...) asparagine glycan is attached at asparagine 107. Residues 112–203 form an alpha-2 region; the sequence is GSHTLQWMSG…ENGKDTLLRA (92 aa). 2 disulfide bridges follow: cysteine 122/cysteine 185 and cysteine 224/cysteine 280. Positions 204–295 are alpha-3; sequence DPPKAHVTHH…GLQEPLTLRW (92 aa). The Ig-like C1-type domain occupies 206-292; the sequence is PKAHVTHHPI…QHEGLQEPLT (87 aa). The tract at residues 296-308 is connecting peptide; the sequence is EPPQPSFLTMGII. A helical membrane pass occupies residues 309–328; it reads VGLVLLVVTGAVVAGVVICM. At 329–360 the chain is on the cytoplasmic side; it reads KKRSGEKGGNYIQASSSDSAQGSDVSLTVPKV. Residues 340–360 form a disordered region; it reads IQASSSDSAQGSDVSLTVPKV. The segment covering 341–354 has biased composition (low complexity); sequence QASSSDSAQGSDVS. Serine 351 and serine 354 each carry phosphoserine.

Belongs to the MHC class I family. Heterodimer of an alpha chain and a beta chain (beta-2-microglobulin).

It is found in the membrane. Involved in the presentation of foreign antigens to the immune system. This chain is BOLA class I histocompatibility antigen, alpha chain BL3-6, found in Bos taurus (Bovine).